The following is a 256-amino-acid chain: 3-hydroxy-5-phosphonooxypentane-2,4-dione thiolase (256 aa).

K168 functions as the Schiff-base intermediate with substrate in the catalytic mechanism.

This sequence belongs to the DeoC/FbaB aldolase family. Homodecamer.

Its subcellular location is the cytoplasm. The catalysed reaction is dihydroxyacetone phosphate + acetyl-CoA = 3-hydroxy-2,4-dioxopentyl phosphate + CoA. In terms of biological role, involved in the degradation of phospho-AI-2, thereby terminating induction of the lsr operon and closing the AI-2 signaling cycle. Catalyzes the transfer of an acetyl moiety from 3-hydroxy-5-phosphonooxypentane-2,4-dione to CoA to form glycerone phosphate and acetyl-CoA. This is 3-hydroxy-5-phosphonooxypentane-2,4-dione thiolase (lsrF) from Shigella flexneri.